Reading from the N-terminus, the 331-residue chain is MEDYDLVIIGAGPTGLFATFLAGLRDIKSITLEALDYVGGQIPELYPEKPVYDVQGIPKINAIKLRDQMYEQAKTFNNRIELNSKVTDIIKENDIFKIEVNGVYKYNARAVLLCTGIGDFTPRKIGCEGEDRFFNKGLTYTVKDTEKFRDLTVAVVGGGDSALDYATELANTARHVYIIHHSENFKAAEKTIDLARKNEKITFIVNSSVISIDGGSKLESIKIKNELTNDISELGLDALVVAIGHVGRANIYKSLPLQLSPNKRGVLVNSKLETNIPGIYAAGDVASVEGEPANPLIAIGGAQAYQAINYIKKYINPQASFFGGHSSNLKI.

Residues Thr-14, Glu-33, Gln-41, Tyr-46, Val-86, Phe-120, Asp-284, and Ser-327 each coordinate FAD.

It belongs to the ferredoxin--NADP reductase type 2 family. In terms of assembly, homodimer. FAD is required as a cofactor.

It catalyses the reaction 2 reduced [2Fe-2S]-[ferredoxin] + NADP(+) + H(+) = 2 oxidized [2Fe-2S]-[ferredoxin] + NADPH. This Picrophilus torridus (strain ATCC 700027 / DSM 9790 / JCM 10055 / NBRC 100828 / KAW 2/3) protein is Ferredoxin--NADP reductase.